The sequence spans 311 residues: Methionyl-tRNA formyltransferase (311 aa).

(6S)-5,6,7,8-tetrahydrofolate is bound at residue 108-111 (SILP).

It belongs to the Fmt family.

The enzyme catalyses L-methionyl-tRNA(fMet) + (6R)-10-formyltetrahydrofolate = N-formyl-L-methionyl-tRNA(fMet) + (6S)-5,6,7,8-tetrahydrofolate + H(+). Attaches a formyl group to the free amino group of methionyl-tRNA(fMet). The formyl group appears to play a dual role in the initiator identity of N-formylmethionyl-tRNA by promoting its recognition by IF2 and preventing the misappropriation of this tRNA by the elongation apparatus. The sequence is that of Methionyl-tRNA formyltransferase from Sorangium cellulosum (strain So ce56) (Polyangium cellulosum (strain So ce56)).